Consider the following 501-residue polypeptide: Glucans biosynthesis protein G (501 aa).

The signal sequence occupies residues 1-25 (MNRRQVLTGLAALPLLQAKPDPAAA).

It belongs to the OpgD/OpgG family.

Its subcellular location is the periplasm. The protein operates within glycan metabolism; osmoregulated periplasmic glucan (OPG) biosynthesis. Involved in the biosynthesis of osmoregulated periplasmic glucans (OPGs). This Rhodopseudomonas palustris (strain ATCC BAA-98 / CGA009) protein is Glucans biosynthesis protein G.